We begin with the raw amino-acid sequence, 288 residues long: Hyaluronidase (288 aa).

The N-linked (GlcNAc...) asparagine glycan is linked to Asn-36. The Proton donor role is filled by Glu-66. Cys-142 and Cys-154 are joined by a disulfide. Asn-282 carries N-linked (GlcNAc...) asparagine glycosylation.

Belongs to the glycosyl hydrolase 56 family. As to expression, expressed by the venom gland.

Its subcellular location is the secreted. The enzyme catalyses Random hydrolysis of (1-&gt;4)-linkages between N-acetyl-beta-D-glucosamine and D-glucuronate residues in hyaluronate.. Hydrolyzes high molecular weight hyaluronic acid to produce small oligosaccharides. This chain is Hyaluronidase, found in Polybia paulista (Neotropical social wasp).